The sequence spans 835 residues: Protein bicaudal D homolog 1 (835 aa).

Residues 1–264 adopt a coiled-coil conformation; the sequence is MAAEEALKTV…YINLSDSHIS (264 aa). Positions 278 to 297 are disordered; sequence EPNNDDKMNGHIHGPLGKLN. Residues 320–519 adopt a coiled-coil conformation; that stretch reads ELNISEIQKL…TFSEELAQLY (200 aa). Disordered regions lie at residues 545–616 and 800–835; these read RSGS…LDTS and DHEQ…SAHN. The span at 557 to 572 shows a compositional bias: low complexity; the sequence is GLLSPRLSRRGVSSPV. The span at 581 to 590 shows a compositional bias: basic and acidic residues; that stretch reads VSKENTETSK. Residues 591–604 show a composition bias toward low complexity; the sequence is EPSPTKTPTISPVI. The stretch at 663–803 forms a coiled coil; it reads IDKDKEALME…LEDLEFDHEQ (141 aa). Positions 663–803 are interaction with RAB6A; the sequence is IDKDKEALME…LEDLEFDHEQ (141 aa).

The protein belongs to the BicD family. Interacts with RAB6A. Interacts (via C-terminus) with RAB6B (GTP-bound); the interaction is direct. Interacts with CLIP-115 and KIFC2. Expressed in the brain, heart and skeletal muscle.

It is found in the golgi apparatus. Its function is as follows. Regulates coat complex coatomer protein I (COPI)-independent Golgi-endoplasmic reticulum transport by recruiting the dynein-dynactin motor complex. This chain is Protein bicaudal D homolog 1 (Bicd1), found in Mus musculus (Mouse).